Here is a 437-residue protein sequence, read N- to C-terminus: Protein translocase subunit SecY (437 aa).

Helical transmembrane passes span 19–39, 69–89, 122–142, 157–177, 189–209, 219–239, 275–295, 318–338, 378–398, and 400–420; these read LFTL…IPGV, LLQI…SIIL, VALA…GALF, IFTT…VMWL, GMSI…LWSI, WIEF…VVFV, GIIP…VVQF, HITV…AISF, GSLY…PLGA, and QNFP…LETV.

Belongs to the SecY/SEC61-alpha family. In terms of assembly, component of the Sec protein translocase complex. Heterotrimer consisting of SecY, SecE and SecG subunits. The heterotrimers can form oligomers, although 1 heterotrimer is thought to be able to translocate proteins. Interacts with the ribosome. Interacts with SecDF, and other proteins may be involved. Interacts with SecA.

The protein localises to the cell membrane. Its function is as follows. The central subunit of the protein translocation channel SecYEG. Consists of two halves formed by TMs 1-5 and 6-10. These two domains form a lateral gate at the front which open onto the bilayer between TMs 2 and 7, and are clamped together by SecE at the back. The channel is closed by both a pore ring composed of hydrophobic SecY resides and a short helix (helix 2A) on the extracellular side of the membrane which forms a plug. The plug probably moves laterally to allow the channel to open. The ring and the pore may move independently. This Streptomyces scabiei protein is Protein translocase subunit SecY.